Here is an 874-residue protein sequence, read N- to C-terminus: Cellulose synthase catalytic subunit [UDP-forming] (874 aa).

4 helical membrane-spanning segments follow: residues 30–50 (SPFS…VFPL), 151–171 (ILGV…TQPF), 173–193 (PLSQ…VRRM), and 230–250 (LVCG…LVLG). The tract at residues 271–364 (QWPTVDIFVP…FVAIFDCDHV (94 aa)) is catalytic subdomain A. D313 is a catalytic residue. The substrate site is built by D360 and D362. Residues 441–501 (KPLDEIGGIA…GQRIRWARGM (61 aa)) are catalytic subdomain B. Residue D457 is part of the active site. Helical transmembrane passes span 525 to 545 (LNAM…TAPL), 547 to 567 (FLLL…LFVI), 592 to 612 (IYET…LINP), 634 to 654 (VISR…AAGV), and 668 to 688 (VIVS…AVAV). Residues 694-790 (QVRRAHRVEI…QHIDFVQCTF (97 aa)) enclose the PilZ domain. The helical transmembrane segment at 833–853 (SVKVIFRSLTALIAWIVSFIP) threads the bilayer.

The protein belongs to the glycosyltransferase 2 family. Mg(2+) serves as cofactor.

The protein localises to the cell inner membrane. The enzyme catalyses [(1-&gt;4)-beta-D-glucosyl](n) + UDP-alpha-D-glucose = [(1-&gt;4)-beta-D-glucosyl](n+1) + UDP + H(+). Its pathway is glycan metabolism; bacterial cellulose biosynthesis. Activated by bis-(3'-5') cyclic diguanylic acid (c-di-GMP). In terms of biological role, catalytic subunit of cellulose synthase. It polymerizes uridine 5'-diphosphate glucose to cellulose, which is produced as an extracellular component for mechanical and chemical protection at the onset of the stationary phase, when the cells exhibit multicellular behavior (rdar morphotype). Coexpression of cellulose and thin aggregative fimbriae leads to a hydrophobic network with tightly packed cells embedded in a highly inert matrix. This chain is Cellulose synthase catalytic subunit [UDP-forming] (bcsA), found in Salmonella typhi.